Consider the following 374-residue polypeptide: Spore germination protein GerLB (374 aa).

The next 10 membrane-spanning stretches (helical) occupy residues 16–36, 44–64, 86–106, 122–142, 149–169, 192–212, 227–247, 279–301, 313–333, and 341–361; these read IGFAVSSTIIGIGALSMPRDI, DGWIILLLGGLICAVLGWFVT, PVAYTISSILVLTFAALTAYE, TPIQLLSFFFLLVVIYGIAGS, LNVLFLPIVLIAIVLLSLLNI, VKNSIFTFIGFEVALFYAVLL, AVMVNVLSYILIYVTCISVFT, FFTTWIITIYNTTAMYYDVASLL, IFIFISAPIIFMVNMIPSSLN, and YLAWIDMGCVVLAPLLVLIVY.

This sequence belongs to the amino acid-polyamine-organocation (APC) superfamily. Spore germination protein (SGP) (TC 2.A.3.9) family.

It is found in the membrane. Functionally, contributes to the L-alanine germination response. In Bacillus cereus, this protein is Spore germination protein GerLB (gerLB).